A 285-amino-acid chain; its full sequence is Shikimate dehydrogenase (NADP(+)) (285 aa).

Residues 20–22 (SRS) and threonine 67 contribute to the shikimate site. The Proton acceptor role is filled by lysine 71. Shikimate is bound by residues asparagine 93 and aspartate 108. NADP(+) contacts are provided by residues 132–136 (GAGGA) and methionine 224. Tyrosine 226 contributes to the shikimate binding site. NADP(+) is bound at residue glycine 248.

The protein belongs to the shikimate dehydrogenase family. Homodimer.

It catalyses the reaction shikimate + NADP(+) = 3-dehydroshikimate + NADPH + H(+). It functions in the pathway metabolic intermediate biosynthesis; chorismate biosynthesis; chorismate from D-erythrose 4-phosphate and phosphoenolpyruvate: step 4/7. Functionally, involved in the biosynthesis of the chorismate, which leads to the biosynthesis of aromatic amino acids. Catalyzes the reversible NADPH linked reduction of 3-dehydroshikimate (DHSA) to yield shikimate (SA). The chain is Shikimate dehydrogenase (NADP(+)) from Bordetella avium (strain 197N).